Reading from the N-terminus, the 146-residue chain is Type II secretion system core protein G (146 aa).

A propeptide spans 1-9 (MKKMRKQTG) (leader sequence). F10 is modified (N-methylphenylalanine). A helical membrane pass occupies residues 10–30 (FTLLEVMVVVVILGILASFVV).

Belongs to the GSP G family. In terms of assembly, type II secretion system is composed of four main components: the outer membrane complex, the inner membrane complex, the cytoplasmic secretion ATPase and the periplasm-spanning pseudopilus. Forms homomultimers. Interacts with EspL. Post-translationally, cleaved by the prepilin peptidase. In terms of processing, methylated by prepilin peptidase at the amino group of the N-terminal phenylalanine once the leader sequence is cleaved.

It is found in the cell inner membrane. Functionally, core component of the type II secretion system required for the energy-dependent secretion of extracellular factors such as proteases and toxins from the periplasm. Pseudopilin (pilin-like) protein that polymerizes to form the pseudopilus. Further polymerization triggers pseudopilus growth. The polypeptide is Type II secretion system core protein G (epsG) (Vibrio cholerae serotype O1 (strain ATCC 39315 / El Tor Inaba N16961)).